The primary structure comprises 24 residues: THPSVLPFIKQLIGTMDSVRGLPR.

The polypeptide is Unknown protein 3 (Pseudotsuga menziesii (Douglas-fir)).